Consider the following 101-residue polypeptide: Integration host factor subunit alpha (101 aa).

The protein belongs to the bacterial histone-like protein family. In terms of assembly, heterodimer of an alpha and a beta chain.

Its function is as follows. This protein is one of the two subunits of integration host factor, a specific DNA-binding protein that functions in genetic recombination as well as in transcriptional and translational control. The chain is Integration host factor subunit alpha from Maricaulis maris (strain MCS10) (Caulobacter maris).